The sequence spans 1006 residues: Retinoblastoma-related protein (1006 aa).

Positions 411 to 604 are domain A; it reads TPVTTAMTTA…EKGSSMYNSL (194 aa). Residues 411–855 are pocket; the sequence is TPVTTAMTTA…NEIFVPAVKP (445 aa). Residues 605 to 724 form a spacer region; that stretch reads IVARPALSAE…PGGGGETCAE (120 aa). The interval 725–855 is domain B; that stretch reads TAVNVFFSKI…NEIFVPAVKP (131 aa). The span at 866 to 893 shows a compositional bias: polar residues; the sequence is AQSGSQVPEAKNNTNGVNPSSPRTSSFP. The interval 866–898 is disordered; it reads AQSGSQVPEAKNNTNGVNPSSPRTSSFPSLPDM.

It belongs to the retinoblastoma protein (RB) family.

The protein localises to the nucleus. Its function is as follows. Regulator of biological processes that recruits a histone deacetylase to control gene transcription. May play a role in the entry into mitosis, negatively regulating the cell proliferation. Formation of stable complexes with geminiviridae replication-associated proteins may create a cellular environment which favors viral DNA replication. The polypeptide is Retinoblastoma-related protein (RB) (Scutellaria baicalensis (Baical skullcap)).